The chain runs to 349 residues: Biotin synthase (349 aa).

The Radical SAM core domain maps to 60–287 (GDVELATLLS…KARVRLSAGR (228 aa)). Residues Cys-75, Cys-79, and Cys-82 each coordinate [4Fe-4S] cluster. Residues Cys-119, Cys-150, Cys-210, and Arg-282 each coordinate [2Fe-2S] cluster.

Belongs to the radical SAM superfamily. Biotin synthase family. In terms of assembly, homodimer. Requires [4Fe-4S] cluster as cofactor. It depends on [2Fe-2S] cluster as a cofactor.

The enzyme catalyses (4R,5S)-dethiobiotin + (sulfur carrier)-SH + 2 reduced [2Fe-2S]-[ferredoxin] + 2 S-adenosyl-L-methionine = (sulfur carrier)-H + biotin + 2 5'-deoxyadenosine + 2 L-methionine + 2 oxidized [2Fe-2S]-[ferredoxin]. The protein operates within cofactor biosynthesis; biotin biosynthesis; biotin from 7,8-diaminononanoate: step 2/2. Functionally, catalyzes the conversion of dethiobiotin (DTB) to biotin by the insertion of a sulfur atom into dethiobiotin via a radical-based mechanism. This Albidiferax ferrireducens (strain ATCC BAA-621 / DSM 15236 / T118) (Rhodoferax ferrireducens) protein is Biotin synthase.